Here is a 360-residue protein sequence, read N- to C-terminus: Phospho-N-acetylmuramoyl-pentapeptide-transferase (360 aa).

The next 10 membrane-spanning stretches (helical) occupy residues 26–46 (AIVS…RLIA), 72–92 (PTMG…LWAY), 94–114 (SNPY…VGFV), 132–152 (WKYF…YITG), 168–188 (VMPQ…VGTG), 199–219 (GLAI…AWAT), 236–256 (AGEL…FLWF), 263–283 (VFMG…IAVL), 288–308 (FLLV…ILQV), and 338–358 (VIVR…ATLK).

Belongs to the glycosyltransferase 4 family. MraY subfamily. Requires Mg(2+) as cofactor.

Its subcellular location is the cell inner membrane. The enzyme catalyses UDP-N-acetyl-alpha-D-muramoyl-L-alanyl-gamma-D-glutamyl-meso-2,6-diaminopimeloyl-D-alanyl-D-alanine + di-trans,octa-cis-undecaprenyl phosphate = di-trans,octa-cis-undecaprenyl diphospho-N-acetyl-alpha-D-muramoyl-L-alanyl-D-glutamyl-meso-2,6-diaminopimeloyl-D-alanyl-D-alanine + UMP. It functions in the pathway cell wall biogenesis; peptidoglycan biosynthesis. Functionally, catalyzes the initial step of the lipid cycle reactions in the biosynthesis of the cell wall peptidoglycan: transfers peptidoglycan precursor phospho-MurNAc-pentapeptide from UDP-MurNAc-pentapeptide onto the lipid carrier undecaprenyl phosphate, yielding undecaprenyl-pyrophosphoryl-MurNAc-pentapeptide, known as lipid I. The chain is Phospho-N-acetylmuramoyl-pentapeptide-transferase from Cronobacter sakazakii (strain ATCC BAA-894) (Enterobacter sakazakii).